Reading from the N-terminus, the 143-residue chain is Large ribosomal subunit protein uL11 (143 aa).

This sequence belongs to the universal ribosomal protein uL11 family. In terms of assembly, part of the ribosomal stalk of the 50S ribosomal subunit. Interacts with L10 and the large rRNA to form the base of the stalk. L10 forms an elongated spine to which L12 dimers bind in a sequential fashion forming a multimeric L10(L12)X complex. One or more lysine residues are methylated.

Its function is as follows. Forms part of the ribosomal stalk which helps the ribosome interact with GTP-bound translation factors. This chain is Large ribosomal subunit protein uL11, found in Pseudomonas entomophila (strain L48).